A 242-amino-acid chain; its full sequence is Glycerol-3-phosphate acyltransferase (242 aa).

Helical transmembrane passes span 7–27 (ISLL…IMFA), 61–81 (IAIG…ILLI), 102–122 (YYLT…PVYF), 135–155 (GFVF…WWTI), 162–182 (VSLA…IPWL), and 201–221 (DWYI…IIIW).

The protein belongs to the PlsY family. Probably interacts with PlsX.

It is found in the cell membrane. The catalysed reaction is an acyl phosphate + sn-glycerol 3-phosphate = a 1-acyl-sn-glycero-3-phosphate + phosphate. It functions in the pathway lipid metabolism; phospholipid metabolism. Functionally, catalyzes the transfer of an acyl group from acyl-phosphate (acyl-PO(4)) to glycerol-3-phosphate (G3P) to form lysophosphatidic acid (LPA). This enzyme utilizes acyl-phosphate as fatty acyl donor, but not acyl-CoA or acyl-ACP. The sequence is that of Glycerol-3-phosphate acyltransferase from Mycoplasmoides gallisepticum (strain R(low / passage 15 / clone 2)) (Mycoplasma gallisepticum).